We begin with the raw amino-acid sequence, 164 residues long: MTLPSARTCFLLGFLFCAALLAAALYFQFSGGLEPCPLCISQRIMVLAVALVFLAAAIHHPASLGIRAYALLGTAVALGGASISGRHVWLLHLPPEEVPECGPGLSYMFRNFPLGDTLKAMLSGTGDCAKVDWTFLGLSMPAWVLICFLGLGAFSLLQWWNAER.

The Cytoplasmic segment spans residues 1–9; the sequence is MTLPSARTC. Residues 10–26 form a helical membrane-spanning segment; the sequence is FLLGFLFCAALLAAALY. Residues 27 to 44 are Periplasmic-facing; it reads FQFSGGLEPCPLCISQRI. A disulfide bridge links cysteine 36 with cysteine 39. A helical membrane pass occupies residues 45–61; it reads MVLAVALVFLAAAIHHP. Residues 62 to 68 are Cytoplasmic-facing; sequence ASLGIRA. A helical membrane pass occupies residues 69-85; sequence YALLGTAVALGGASISG. At 86–142 the chain is on the periplasmic side; it reads RHVWLLHLPPEEVPECGPGLSYMFRNFPLGDTLKAMLSGTGDCAKVDWTFLGLSMPA. Residues cysteine 101 and cysteine 128 are joined by a disulfide bond. The helical transmembrane segment at 143–161 threads the bilayer; sequence WVLICFLGLGAFSLLQWWN. Residues 162-164 are Cytoplasmic-facing; sequence AER.

Belongs to the DsbB family.

It localises to the cell inner membrane. Functionally, required for disulfide bond formation in some periplasmic proteins. Acts by oxidizing the DsbA protein. This Methylococcus capsulatus (strain ATCC 33009 / NCIMB 11132 / Bath) protein is Disulfide bond formation protein B.